The sequence spans 1015 residues: Probable beta-galactosidase B (1015 aa).

A signal peptide spans 1 to 20; the sequence is MAHIYRLLLLLLSNLWFSTA. N-linked (GlcNAc...) asparagine glycosylation is present at Asn-23. Tyr-90 is a substrate binding site. 2 N-linked (GlcNAc...) asparagine glycosylation sites follow: Asn-99 and Asn-100. Substrate contacts are provided by Asn-135, Ala-136, and Glu-137. Residue Asn-172 is glycosylated (N-linked (GlcNAc...) asparagine). Substrate is bound at residue Asn-195. The active-site Proton donor is the Glu-196. Asn-211 is a glycosylation site (N-linked (GlcNAc...) asparagine). Tyr-265 is a binding site for substrate. Cys-271 and Cys-324 are joined by a disulfide. Catalysis depends on Glu-308, which acts as the Nucleophile. Position 373 (Tyr-373) interacts with substrate. 7 N-linked (GlcNAc...) asparagine glycosylation sites follow: Asn-411, Asn-456, Asn-554, Asn-679, Asn-735, Asn-775, and Asn-821.

It belongs to the glycosyl hydrolase 35 family.

It is found in the secreted. It carries out the reaction Hydrolysis of terminal non-reducing beta-D-galactose residues in beta-D-galactosides.. Functionally, cleaves beta-linked terminal galactosyl residues from gangliosides, glycoproteins, and glycosaminoglycans. The sequence is that of Probable beta-galactosidase B (lacB) from Aspergillus fumigatus (strain CBS 144.89 / FGSC A1163 / CEA10) (Neosartorya fumigata).